The primary structure comprises 276 residues: Omega-amidase NIT2 (276 aa).

Positions 4–248 constitute a CN hydrolase domain; that stretch reads FRLALIQLQV…ETILYSDIDL (245 aa). Ser26 bears the Phosphoserine mark. Glu43 (proton acceptor) is an active-site residue. Lys68 is modified (N6-acetyllysine; alternate). At Lys68 the chain carries N6-succinyllysine; alternate. The active-site Proton donor is the Lys112. N6-succinyllysine occurs at positions 123 and 130. Catalysis depends on Cys153, which acts as the Nucleophile.

It belongs to the carbon-nitrogen hydrolase superfamily. NIT1/NIT2 family. In terms of assembly, homodimer.

The protein localises to the cytoplasm. The catalysed reaction is a monoamide of a dicarboxylate + H2O = a dicarboxylate + NH4(+). It carries out the reaction 2-oxoglutaramate + H2O = 2-oxoglutarate + NH4(+). The enzyme catalyses 2-oxosuccinamate + H2O = oxaloacetate + NH4(+). Functionally, has omega-amidase activity. The role of omega-amidase is to remove potentially toxic intermediates by converting 2-oxoglutaramate and 2-oxosuccinamate to biologically useful 2-oxoglutarate and oxaloacetate, respectively. Can also hydrolyze gamma-monomethyl-alpha-ketoglutarate in vitro. The protein is Omega-amidase NIT2 of Mus musculus (Mouse).